Reading from the N-terminus, the 378-residue chain is tRNA (guanine(26)-N(2))-dimethyltransferase (378 aa).

Positions 4-374 (KEVTEGKVRI…KGYEEIIRCV (371 aa)) constitute a Trm1 methyltransferase domain. S-adenosyl-L-methionine is bound by residues Arg44, Arg69, Asp87, Asp114, and Ala115. Zn(2+)-binding residues include Cys246, Cys249, Cys263, and Cys266.

This sequence belongs to the class I-like SAM-binding methyltransferase superfamily. Trm1 family.

It catalyses the reaction guanosine(26) in tRNA + 2 S-adenosyl-L-methionine = N(2)-dimethylguanosine(26) in tRNA + 2 S-adenosyl-L-homocysteine + 2 H(+). Dimethylates a single guanine residue at position 26 of a number of tRNAs using S-adenosyl-L-methionine as donor of the methyl groups. This chain is tRNA (guanine(26)-N(2))-dimethyltransferase, found in Saccharolobus islandicus (strain M.14.25 / Kamchatka #1) (Sulfolobus islandicus).